Consider the following 468-residue polypeptide: Glutamate--tRNA ligase 2 (468 aa).

Positions 9–19 match the 'HIGH' region motif; that stretch reads PSPTGFLHIGG. The 'KMSKS' region signature appears at 238-242; the sequence is KLSKR. Lys-241 is a binding site for ATP.

It belongs to the class-I aminoacyl-tRNA synthetase family. Glutamate--tRNA ligase type 1 subfamily. In terms of assembly, monomer.

Its subcellular location is the cytoplasm. The catalysed reaction is tRNA(Glu) + L-glutamate + ATP = L-glutamyl-tRNA(Glu) + AMP + diphosphate. In terms of biological role, catalyzes the attachment of glutamate to tRNA(Glu) in a two-step reaction: glutamate is first activated by ATP to form Glu-AMP and then transferred to the acceptor end of tRNA(Glu). This Rhodospirillum centenum (strain ATCC 51521 / SW) protein is Glutamate--tRNA ligase 2.